We begin with the raw amino-acid sequence, 241 residues long: MATSTNSQDDAALSAAQAAALYRLMTWLSPAFPVGAFSYSSGIEWAVEAGDVVDAPTLQAWLAAMLSHGTGFCDAVLLAHAHRAVISNDDDALRSLAELACAYVSSRERHLETTAQGRAFVEIARAAWANGRLERAVADCAGLTAYPVAVGIVSAAHGVPLAATLHGFLHAVVSNWISAGARLIPLGQTDSQRLIAALEPAVIATGARALIASLDDLGGATFRADLASLQHEAQYTRLFRS.

Belongs to the UreF family. In terms of assembly, ureD, UreF and UreG form a complex that acts as a GTP-hydrolysis-dependent molecular chaperone, activating the urease apoprotein by helping to assemble the nickel containing metallocenter of UreC. The UreE protein probably delivers the nickel.

The protein localises to the cytoplasm. Its function is as follows. Required for maturation of urease via the functional incorporation of the urease nickel metallocenter. The chain is Urease accessory protein UreF from Rhodopseudomonas palustris (strain BisB18).